We begin with the raw amino-acid sequence, 383 residues long: Galactokinase (383 aa).

34–37 provides a ligand contact to substrate; sequence EHTD. 124-130 provides a ligand contact to ATP; it reads GAGLSSS. Mg(2+)-binding residues include S130 and E162. D174 (proton acceptor) is an active-site residue. Residue Y223 participates in substrate binding.

It belongs to the GHMP kinase family. GalK subfamily.

The protein localises to the cytoplasm. The enzyme catalyses alpha-D-galactose + ATP = alpha-D-galactose 1-phosphate + ADP + H(+). Its pathway is carbohydrate metabolism; galactose metabolism. Catalyzes the transfer of the gamma-phosphate of ATP to D-galactose to form alpha-D-galactose-1-phosphate (Gal-1-P). This is Galactokinase from Yersinia pseudotuberculosis serotype O:1b (strain IP 31758).